The chain runs to 340 residues: C5a anaphylatoxin chemotactic receptor 1 (340 aa).

Residues 1–30 (TPDYGHYDDKDTLDANTPVDKTSNTLRVPD) are Extracellular-facing. The required for CHIPS binding stretch occupies residues 3–11 (DYGHYDDKD). Sulfotyrosine occurs at positions 4 and 7. The segment at 14 to 23 (DANTPVDKTS) is involved in C5a binding. A helical membrane pass occupies residues 31–57 (ILALVIFAVVFLVGVLRNALVVWVTAF). The Cytoplasmic segment spans residues 58–62 (EAKRT). A helical membrane pass occupies residues 63 to 86 (INAIWFLNLAVADFLSCLALPILF). Over 87–103 (TSIVQHHHWPFGGAACR) the chain is Extracellular. Cysteines 102 and 181 form a disulfide. A helical membrane pass occupies residues 104–125 (ILPSLILLNMYASILLLATISA). The Cytoplasmic segment spans residues 126–146 (DRFLLVFNPIWCQNFRGAGLA). Residues 147 to 167 (WIACAVAWGLALLLTIPSFLY) traverse the membrane as a helical segment. Residues 168–193 (RVVREEYFPPKVLCGVDHGHDKRRER) lie on the Extracellular side of the membrane. The chain crosses the membrane as a helical span at residues 194–219 (AVAIARLVLGFVWPLLTLTMCYTFLL). The Cytoplasmic segment spans residues 220–235 (LRTWSRRATRSTKTLK). Residues 236–258 (VVVAVVASFFIFWLPYQVTGMMM) form a helical membrane-spanning segment. The Extracellular segment spans residues 259–275 (SFLEPSSPTFLLLKKLD). A helical transmembrane segment spans residues 276-296 (SLCISFAYINCCINPIIYVVA). Residues 297–340 (GQGFQGRLRKSLPSLLRNVLTEESMVRESKSFTRSTVDTMAQKT) lie on the Cytoplasmic side of the membrane. Serine 307, serine 310, serine 320, serine 325, serine 327, and serine 331 each carry phosphoserine.

It belongs to the G-protein coupled receptor 1 family. As to quaternary structure, homodimer. May also form higher-order oligomers. Interacts (when phosphorylated) with ARRB1 and ARRB2; the interaction is associated with internalization of C5aR. Interacts (via N-terminal domain) with S.aureus chemotaxis inhibitory protein (CHIPS); the interaction blocks the receptor and may thus inhibit the immune response. Post-translationally, sulfation plays a critical role in the association of C5aR with C5a, but no significant role in the ability of the receptor to transduce a signal and mobilize calcium in response to a small peptide agonist. Sulfation at Tyr-7 is important for CHIPS binding. In terms of processing, phosphorylated on serine residues in response to C5a binding, resulting in internalization of the receptor and short-term desensitization to C5a.

It localises to the cell membrane. It is found in the cytoplasmic vesicle. Functionally, receptor for the chemotactic and inflammatory peptide anaphylatoxin C5a. The ligand interacts with at least two sites on the receptor: a high-affinity site on the extracellular N-terminus, and a second site in the transmembrane region which activates downstream signaling events. Receptor activation stimulates chemotaxis, granule enzyme release, intracellular calcium release and superoxide anion production. The polypeptide is C5a anaphylatoxin chemotactic receptor 1 (C5AR1) (Macaca mulatta (Rhesus macaque)).